Here is a 196-residue protein sequence, read N- to C-terminus: GTP cyclohydrolase 1 (196 aa).

Zn(2+)-binding residues include cysteine 86, histidine 89, and cysteine 158.

The protein belongs to the GTP cyclohydrolase I family. As to quaternary structure, toroid-shaped homodecamer, composed of two pentamers of five dimers.

It catalyses the reaction GTP + H2O = 7,8-dihydroneopterin 3'-triphosphate + formate + H(+). The protein operates within cofactor biosynthesis; 7,8-dihydroneopterin triphosphate biosynthesis; 7,8-dihydroneopterin triphosphate from GTP: step 1/1. The polypeptide is GTP cyclohydrolase 1 (Clostridium botulinum (strain ATCC 19397 / Type A)).